A 152-amino-acid polypeptide reads, in one-letter code: MSTQEATPRDDAIRLLARRDYSRSELMSRLAARGHAPDDIASLLDALADEGLQSDARFAEQFVRSRLSRGQGAMKIRAELGARGVTDEVAREALEGEAPDWHRLACEALAKRFDSPGRDPRERAKRERFLASRGFDFEQVRHAMAHAWENTR.

Belongs to the RecX family.

The protein localises to the cytoplasm. Its function is as follows. Modulates RecA activity. This is Regulatory protein RecX from Chromohalobacter salexigens (strain ATCC BAA-138 / DSM 3043 / CIP 106854 / NCIMB 13768 / 1H11).